We begin with the raw amino-acid sequence, 500 residues long: Probable malate:quinone oxidoreductase (500 aa).

It belongs to the MQO family. FAD is required as a cofactor.

It catalyses the reaction (S)-malate + a quinone = a quinol + oxaloacetate. It participates in carbohydrate metabolism; tricarboxylic acid cycle; oxaloacetate from (S)-malate (quinone route): step 1/1. The chain is Probable malate:quinone oxidoreductase from Bacillus mycoides (strain KBAB4) (Bacillus weihenstephanensis).